A 187-amino-acid chain; its full sequence is Putative protein 2 (187 aa).

A run of 2 helical transmembrane segments spans residues 10-27 (MLAA…NVGV) and 99-121 (VTII…LLLV).

Belongs to the TMEM9 family.

It localises to the membrane. The protein is Putative protein 2 of Takifugu rubripes (Japanese pufferfish).